Here is a 446-residue protein sequence, read N- to C-terminus: Glycine--tRNA ligase (446 aa).

Substrate contacts are provided by Arg100 and Glu158. ATP-binding positions include 190–192, 200–205, 275–276, and 319–322; these read RNE, FRTREF, EL, and GIER. Substrate is bound at residue 205-209; it reads FEQFE. 315–319 contributes to the substrate binding site; sequence EPAVG.

Belongs to the class-II aminoacyl-tRNA synthetase family. Homodimer.

Its subcellular location is the cytoplasm. The catalysed reaction is tRNA(Gly) + glycine + ATP = glycyl-tRNA(Gly) + AMP + diphosphate. Its function is as follows. Catalyzes the attachment of glycine to tRNA(Gly). This chain is Glycine--tRNA ligase, found in Mycoplasma genitalium (strain ATCC 33530 / DSM 19775 / NCTC 10195 / G37) (Mycoplasmoides genitalium).